The following is a 286-amino-acid chain: Elongation factor Ts (286 aa).

An involved in Mg(2+) ion dislocation from EF-Tu region spans residues 79 to 82; sequence TDFV.

It belongs to the EF-Ts family.

The protein localises to the cytoplasm. Functionally, associates with the EF-Tu.GDP complex and induces the exchange of GDP to GTP. It remains bound to the aminoacyl-tRNA.EF-Tu.GTP complex up to the GTP hydrolysis stage on the ribosome. The protein is Elongation factor Ts of Wolbachia sp. subsp. Drosophila simulans (strain wRi).